The chain runs to 709 residues: Ribosomal RNA large subunit methyltransferase K/L (709 aa).

Residues 43-154 (LAYRITLWTR…NGVITIAMNF (112 aa)) form the THUMP domain.

The protein belongs to the methyltransferase superfamily. RlmKL family.

It is found in the cytoplasm. The catalysed reaction is guanosine(2445) in 23S rRNA + S-adenosyl-L-methionine = N(2)-methylguanosine(2445) in 23S rRNA + S-adenosyl-L-homocysteine + H(+). It catalyses the reaction guanosine(2069) in 23S rRNA + S-adenosyl-L-methionine = N(2)-methylguanosine(2069) in 23S rRNA + S-adenosyl-L-homocysteine + H(+). Functionally, specifically methylates the guanine in position 2445 (m2G2445) and the guanine in position 2069 (m7G2069) of 23S rRNA. The sequence is that of Ribosomal RNA large subunit methyltransferase K/L from Shewanella sp. (strain W3-18-1).